Reading from the N-terminus, the 213-residue chain is MKNKIDYSIYLVTDRDLMSTNTLEEAVEKSILGGTTLVQLREKECSSHDFYETALNVKKITQKYNIPLIINDRVDIALAVDADGIHIGQSDLPATVVRNIIGEDKILGVSAGNLDEALKAQKDGADYIGVGAMYSTGTKKDATSTTMNELREIMKKVSIPVVVIGGINKERIKDFNGINIDGLAIVSAIIAQENIEKSTRELKEEFDKLNTLI.

4-amino-2-methyl-5-(diphosphooxymethyl)pyrimidine-binding positions include 39-43 and N71; that span reads QLREK. Residues D72 and D91 each coordinate Mg(2+). S110 contacts 4-amino-2-methyl-5-(diphosphooxymethyl)pyrimidine. 136-138 lines the 2-[(2R,5Z)-2-carboxy-4-methylthiazol-5(2H)-ylidene]ethyl phosphate pocket; the sequence is TGT. A 4-amino-2-methyl-5-(diphosphooxymethyl)pyrimidine-binding site is contributed by K139. 2-[(2R,5Z)-2-carboxy-4-methylthiazol-5(2H)-ylidene]ethyl phosphate-binding positions include G166 and 186 to 187; that span reads VS.

This sequence belongs to the thiamine-phosphate synthase family. Requires Mg(2+) as cofactor.

It carries out the reaction 2-[(2R,5Z)-2-carboxy-4-methylthiazol-5(2H)-ylidene]ethyl phosphate + 4-amino-2-methyl-5-(diphosphooxymethyl)pyrimidine + 2 H(+) = thiamine phosphate + CO2 + diphosphate. The enzyme catalyses 2-(2-carboxy-4-methylthiazol-5-yl)ethyl phosphate + 4-amino-2-methyl-5-(diphosphooxymethyl)pyrimidine + 2 H(+) = thiamine phosphate + CO2 + diphosphate. It catalyses the reaction 4-methyl-5-(2-phosphooxyethyl)-thiazole + 4-amino-2-methyl-5-(diphosphooxymethyl)pyrimidine + H(+) = thiamine phosphate + diphosphate. The protein operates within cofactor biosynthesis; thiamine diphosphate biosynthesis; thiamine phosphate from 4-amino-2-methyl-5-diphosphomethylpyrimidine and 4-methyl-5-(2-phosphoethyl)-thiazole: step 1/1. Functionally, condenses 4-methyl-5-(beta-hydroxyethyl)thiazole monophosphate (THZ-P) and 2-methyl-4-amino-5-hydroxymethyl pyrimidine pyrophosphate (HMP-PP) to form thiamine monophosphate (TMP). This is Thiamine-phosphate synthase from Clostridium botulinum (strain Eklund 17B / Type B).